The sequence spans 145 residues: Immune protein Tsi3 (145 aa).

The first 15 residues, 1–15 (MKTVALILASLALLA), serve as a signal peptide directing secretion. C16 carries N-palmitoyl cysteine lipidation. C16 is lipidated: S-diacylglycerol cysteine. The disordered stretch occupies residues 53–85 (FDEGGKLRNPRQLEVQRQDAPPPPDLASRRLGD). Residue E126 coordinates Ca(2+).

Forms a heterotetramer with Tse3 consisting of two Tse3 dimers and two Tsi3 dimers. Formation of the complex inactivates Tse3 enzymatic activity.

Its function is as follows. Immunity protein that plays a role in preventing early activation of toxin Tse3. Occupies Tse3 substrate binding site and prevents the substrate from entering. The sequence is that of Immune protein Tsi3 from Pseudomonas aeruginosa (strain ATCC 15692 / DSM 22644 / CIP 104116 / JCM 14847 / LMG 12228 / 1C / PRS 101 / PAO1).